A 499-amino-acid chain; its full sequence is Aspartyl/glutamyl-tRNA(Asn/Gln) amidotransferase subunit B (499 aa).

Belongs to the GatB/GatE family. GatB subfamily. In terms of assembly, heterotrimer of A, B and C subunits.

It carries out the reaction L-glutamyl-tRNA(Gln) + L-glutamine + ATP + H2O = L-glutaminyl-tRNA(Gln) + L-glutamate + ADP + phosphate + H(+). It catalyses the reaction L-aspartyl-tRNA(Asn) + L-glutamine + ATP + H2O = L-asparaginyl-tRNA(Asn) + L-glutamate + ADP + phosphate + 2 H(+). In terms of biological role, allows the formation of correctly charged Asn-tRNA(Asn) or Gln-tRNA(Gln) through the transamidation of misacylated Asp-tRNA(Asn) or Glu-tRNA(Gln) in organisms which lack either or both of asparaginyl-tRNA or glutaminyl-tRNA synthetases. The reaction takes place in the presence of glutamine and ATP through an activated phospho-Asp-tRNA(Asn) or phospho-Glu-tRNA(Gln). This is Aspartyl/glutamyl-tRNA(Asn/Gln) amidotransferase subunit B from Salinispora arenicola (strain CNS-205).